A 445-amino-acid polypeptide reads, in one-letter code: Tubulin beta-4B chain (445 aa).

Positions 1–4 (MREI) match the MREI motif motif. Gln11 is a binding site for GTP. Position 55 is a phosphothreonine (Thr55). Lys58 carries the N6-acetyllysine modification. GTP contacts are provided by Glu69, Ser138, Gly142, Thr143, and Gly144. Glu69 contacts Mg(2+). A Phosphoserine; by CDK1 modification is found at Ser172. GTP contacts are provided by Asn204 and Asn226. The interval 426-445 (QDATAEEEGEFEEEAEEEVA) is disordered. Over residues 429-445 (TAEEEGEFEEEAEEEVA) the composition is skewed to acidic residues. Glu438 is subject to 5-glutamyl polyglutamate.

The protein belongs to the tubulin family. As to quaternary structure, dimer of alpha and beta chains. A typical microtubule is a hollow water-filled tube with an outer diameter of 25 nm and an inner diameter of 15 nM. Alpha-beta heterodimers associate head-to-tail to form protofilaments running lengthwise along the microtubule wall with the beta-tubulin subunit facing the microtubule plus end conferring a structural polarity. Microtubules usually have 13 protofilaments but different protofilament numbers can be found in some organisms and specialized cells. Component of sperm flagellar doublet microtubules. Requires Mg(2+) as cofactor. In terms of processing, some glutamate residues at the C-terminus are polyglycylated, resulting in polyglycine chains on the gamma-carboxyl group. Glycylation is mainly limited to tubulin incorporated into axonemes (cilia and flagella) whereas glutamylation is prevalent in neuronal cells, centrioles, axonemes, and the mitotic spindle. Both modifications can coexist on the same protein on adjacent residues, and lowering polyglycylation levels increases polyglutamylation, and reciprocally. Cilia and flagella glycylation is required for their stability and maintenance. Flagella glycylation controls sperm motility. Some glutamate residues at the C-terminus are polyglutamylated, resulting in polyglutamate chains on the gamma-carboxyl group. Polyglutamylation plays a key role in microtubule severing by spastin (SPAST). SPAST preferentially recognizes and acts on microtubules decorated with short polyglutamate tails: severing activity by SPAST increases as the number of glutamates per tubulin rises from one to eight, but decreases beyond this glutamylation threshold. Glutamylation is also involved in cilia motility. Post-translationally, phosphorylated on Ser-172 by CDK1 during the cell cycle, from metaphase to telophase, but not in interphase. This phosphorylation inhibits tubulin incorporation into microtubules.

The protein localises to the cytoplasm. The protein resides in the cytoskeleton. It is found in the flagellum axoneme. Functionally, tubulin is the major constituent of microtubules, a cylinder consisting of laterally associated linear protofilaments composed of alpha- and beta-tubulin heterodimers. Microtubules grow by the addition of GTP-tubulin dimers to the microtubule end, where a stabilizing cap forms. Below the cap, tubulin dimers are in GDP-bound state, owing to GTPase activity of alpha-tubulin. The chain is Tubulin beta-4B chain (Tubb4b) from Rattus norvegicus (Rat).